The primary structure comprises 489 residues: N-succinylglutamate 5-semialdehyde dehydrogenase (489 aa).

An NAD(+)-binding site is contributed by 223 to 228; the sequence is GSSRTG. Active-site residues include Glu246 and Cys280.

Belongs to the aldehyde dehydrogenase family. AstD subfamily.

The catalysed reaction is N-succinyl-L-glutamate 5-semialdehyde + NAD(+) + H2O = N-succinyl-L-glutamate + NADH + 2 H(+). Its pathway is amino-acid degradation; L-arginine degradation via AST pathway; L-glutamate and succinate from L-arginine: step 4/5. In terms of biological role, catalyzes the NAD-dependent reduction of succinylglutamate semialdehyde into succinylglutamate. This is N-succinylglutamate 5-semialdehyde dehydrogenase from Aeromonas hydrophila subsp. hydrophila (strain ATCC 7966 / DSM 30187 / BCRC 13018 / CCUG 14551 / JCM 1027 / KCTC 2358 / NCIMB 9240 / NCTC 8049).